The sequence spans 277 residues: Glutamate racemase (277 aa).

Substrate is bound by residues 25-26 and 57-58; these read DS and YG. Catalysis depends on C89, which acts as the Proton donor/acceptor. Substrate is bound at residue 90–91; the sequence is NT. Residue C204 is the Proton donor/acceptor of the active site. Residue 205-206 coordinates substrate; it reads TH.

The protein belongs to the aspartate/glutamate racemases family.

It catalyses the reaction L-glutamate = D-glutamate. It functions in the pathway cell wall biogenesis; peptidoglycan biosynthesis. Provides the (R)-glutamate required for cell wall biosynthesis. The chain is Glutamate racemase from Brucella abortus (strain 2308).